Here is a 615-residue protein sequence, read N- to C-terminus: Nuclear receptor subfamily 1 group D member 1 (615 aa).

Over residues Met1 to Gly12 the composition is skewed to polar residues. The tract at residues Met1–Ser70 is required for phosphorylation by CSNK1E and cytoplasmic localization. The disordered stretch occupies residues Met1–Thr120. The segment at Met1 to Met129 is modulating. Over residues Ile14–Ser34 the composition is skewed to low complexity. Over residues Asp35–Cys48 the composition is skewed to polar residues. The interval Pro49–Thr285 is crucial for activation of GJA1. A phosphoserine; by GSK3-beta mark is found at Ser55 and Ser59. The span at Ser70–Ser94 shows a compositional bias: low complexity. Residues Val130 to Phe206 constitute a DNA-binding region (nuclear receptor). 2 NR C4-type zinc fingers span residues Cys133–Cys153 and Cys170–Cys194. An N6-acetyllysine; by KAT5 mark is found at Lys192 and Lys193. 2 disordered regions span residues Leu235 to Met286 and Pro312 to Cys337. Over residues Thr240 to Gly252 the composition is skewed to low complexity. Pro residues predominate over residues Pro253–Thr262. Thr275 carries the phosphothreonine; by CDK1 modification. The region spanning Thr285–Gln615 is the NR LBD domain. Polar residues predominate over residues Pro312 to Thr328. Heme is bound at residue Cys419. An N6-acetyllysine modification is found at Lys592. Heme is bound at residue His603.

It belongs to the nuclear hormone receptor family. NR1 subfamily. In terms of assembly, binds DNA as a monomer or a homodimer. Interacts with NR2E3 and ZNHIT1. Interacts with C1D. Interacts with SP1. Interacts with OPHN1 (via C-terminus). Interacts with PER2; the interaction associates PER2 to BMAL1 promoter region. Interacts with CRY1. Interacts with CCAR2. Interacts with SIAH2. Interacts with FBXW7 and CDK1. Interacts with HUWE1. Interacts with NR0B2. Interacts with NFIL3. Interacts (via domain NR LBD) with HSP90AA1 and HSP90AB1. In terms of processing, ubiquitinated, leading to its proteasomal degradation. Ubiquitinated by the SCF(FBXW7) complex when phosphorylated by CDK1 leading to its proteasomal degradation. Ubiquitinated by SIAH2; leading to its proteasomal degradation. Rapidly ubiquitinated in response to inflammatory triggers and sumoylation is a prerequisite to its ubiquitination. Post-translationally, sumoylated by UBE2I, desumoylated by SENP1, and sumoylation is a prerequisite to its ubiquitination. Phosphorylated by CSNK1E; phosphorylation enhances its cytoplasmic localization. In terms of processing, undergoes lysosome-mediated degradation in a time-dependent manner in the liver. In terms of tissue distribution, expressed during adipocyte differentiation (at protein level). Expressed in skeletal muscle, bladder, lumbar spinal cord, pancreatic islets and hypothalamus. Expressed in developing and adult retina. In the adult retina, predominantly expressed in the outer nuclear layer, where rod and cone cells reside, and also localized to the ganglion cell layer. Expressed in a circadian manner in the liver. Expressed in a circadian manner in the lung with a peak between ZT8 and ZT12.

It is found in the nucleus. Its subcellular location is the cytoplasm. It localises to the cell projection. The protein localises to the dendrite. The protein resides in the dendritic spine. Its function is as follows. Transcriptional repressor which coordinates circadian rhythm and metabolic pathways in a heme-dependent manner. Integral component of the complex transcription machinery that governs circadian rhythmicity and forms a critical negative limb of the circadian clock by directly repressing the expression of core clock components BMAL1, CLOCK and CRY1. Also regulates genes involved in metabolic functions, including lipid and bile acid metabolism, adipogenesis, gluconeogenesis and the macrophage inflammatory response. Acts as a receptor for heme which stimulates its interaction with the NCOR1/HDAC3 corepressor complex, enhancing transcriptional repression. Recognizes two classes of DNA response elements within the promoter of its target genes and can bind to DNA as either monomers or homodimers, depending on the nature of the response element. Binds as a monomer to a response element composed of the consensus half-site motif 5'-[A/G]GGTCA-3' preceded by an A/T-rich 5' sequence (RevRE), or as a homodimer to a direct repeat of the core motif spaced by two nucleotides (RevDR-2). Acts as a potent competitive repressor of ROR alpha (RORA) function and regulates the levels of its ligand heme by repressing the expression of PPARGC1A, a potent inducer of heme synthesis. Regulates lipid metabolism by repressing the expression of APOC3 and by influencing the activity of sterol response element binding proteins (SREBPs); represses INSIG2 which interferes with the proteolytic activation of SREBPs which in turn govern the rhythmic expression of enzymes with key functions in sterol and fatty acid synthesis. Regulates gluconeogenesis via repression of G6PC1 and PEPCK and adipocyte differentiation via repression of PPARG. Regulates glucagon release in pancreatic alpha-cells via the AMPK-NAMPT-SIRT1 pathway and the proliferation, glucose-induced insulin secretion and expression of key lipogenic genes in pancreatic-beta cells. Positively regulates bile acid synthesis by increasing hepatic expression of CYP7A1 via repression of NR0B2 and NFIL3 which are negative regulators of CYP7A1. Modulates skeletal muscle oxidative capacity by regulating mitochondrial biogenesis and autophagy; controls mitochondrial biogenesis and respiration by interfering with the STK11-PRKAA1/2-SIRT1-PPARGC1A signaling pathway. Represses the expression of SERPINE1/PAI1, an important modulator of cardiovascular disease and the expression of inflammatory cytokines and chemokines in macrophages. Represses gene expression at a distance in macrophages by inhibiting the transcription of enhancer-derived RNAs (eRNAs). Plays a role in the circadian regulation of body temperature and negatively regulates thermogenic transcriptional programs in brown adipose tissue (BAT); imposes a circadian oscillation in BAT activity, increasing body temperature when awake and depressing thermogenesis during sleep. In concert with NR2E3, regulates transcriptional networks critical for photoreceptor development and function. In addition to its activity as a repressor, can also act as a transcriptional activator. In the ovarian granulosa cells acts as a transcriptional activator of STAR which plays a role in steroid biosynthesis. In collaboration with SP1, activates GJA1 transcription in a heme-independent manner. Represses the transcription of CYP2B10, CYP4A10 and CYP4A14. Represses the transcription of CES2. Represses and regulates the circadian expression of TSHB in a NCOR1-dependent manner. Negatively regulates the protein stability of NR3C1 and influences the time-dependent subcellular distribution of NR3C1, thereby affecting its transcriptional regulatory activity. Plays a critical role in the circadian control of neutrophilic inflammation in the lung; under resting, non-stress conditions, acts as a rhythmic repressor to limit inflammatory activity whereas in the presence of inflammatory triggers undergoes ubiquitin-mediated degradation thereby relieving inhibition of the inflammatory response. Plays a key role in the circadian regulation of microglial activation and neuroinflammation; suppresses microglial activation through the NF-kappaB pathway in the central nervous system. Plays a role in the regulation of the diurnal rhythms of lipid and protein metabolism in the skeletal muscle via transcriptional repression of genes controlling lipid and amino acid metabolism in the muscle. The sequence is that of Nuclear receptor subfamily 1 group D member 1 (Nr1d1) from Mus musculus (Mouse).